A 323-amino-acid polypeptide reads, in one-letter code: Protoheme IX farnesyltransferase (323 aa).

A run of 9 helical transmembrane segments spans residues 28–48 (IIPLLLITTAAAMWIASNGQV), 50–70 (PVLLLVTLLGGTLAAASAQTL), 99–119 (HALIFAIILAVLSFTLFVVFV), 122–142 (ASALLAMSGIAFYMLIYTHML), 150–170 (IVIGGAAGSIPPLVGWAAVTG), 178–198 (ALFAIIFLWTPPHFWALALMI), 223–243 (IWIYTLIVVPFTFILVYPLAA), 244–264 (SGIVYTLVALVLGGMFIYKTW), and 279–299 (LFKYSILYMMLLCTGMVVDSL).

The protein belongs to the UbiA prenyltransferase family. Protoheme IX farnesyltransferase subfamily.

The protein resides in the cell inner membrane. It carries out the reaction heme b + (2E,6E)-farnesyl diphosphate + H2O = Fe(II)-heme o + diphosphate. Its pathway is porphyrin-containing compound metabolism; heme O biosynthesis; heme O from protoheme: step 1/1. Functionally, converts heme B (protoheme IX) to heme O by substitution of the vinyl group on carbon 2 of heme B porphyrin ring with a hydroxyethyl farnesyl side group. The chain is Protoheme IX farnesyltransferase from Gloeothece citriformis (strain PCC 7424) (Cyanothece sp. (strain PCC 7424)).